Here is a 339-residue protein sequence, read N- to C-terminus: Serpentine receptor class alpha-20 (339 aa).

6 helical membrane passes run 30 to 50 (VSFV…VLAI), 113 to 132 (LYFY…SLTF), 151 to 171 (VSIS…YFGL), 199 to 219 (FRTT…YLNV), 249 to 269 (CILI…VNYI), and 284 to 304 (IAPF…VIYF).

It belongs to the nematode receptor-like protein sra family.

The protein localises to the membrane. This chain is Serpentine receptor class alpha-20 (sra-20), found in Caenorhabditis elegans.